The following is a 635-amino-acid chain: 1-deoxy-D-xylulose-5-phosphate synthase (635 aa).

Residues H74 and 115-117 each bind thiamine diphosphate; that span reads AHS. D146 is a Mg(2+) binding site. Thiamine diphosphate-binding positions include 147–148, N176, Y283, and E365; that span reads GA. Mg(2+) is bound at residue N176.

Belongs to the transketolase family. DXPS subfamily. Homodimer. Mg(2+) serves as cofactor. Thiamine diphosphate is required as a cofactor.

The catalysed reaction is D-glyceraldehyde 3-phosphate + pyruvate + H(+) = 1-deoxy-D-xylulose 5-phosphate + CO2. It functions in the pathway metabolic intermediate biosynthesis; 1-deoxy-D-xylulose 5-phosphate biosynthesis; 1-deoxy-D-xylulose 5-phosphate from D-glyceraldehyde 3-phosphate and pyruvate: step 1/1. Functionally, catalyzes the acyloin condensation reaction between C atoms 2 and 3 of pyruvate and glyceraldehyde 3-phosphate to yield 1-deoxy-D-xylulose-5-phosphate (DXP). In Polaromonas sp. (strain JS666 / ATCC BAA-500), this protein is 1-deoxy-D-xylulose-5-phosphate synthase.